The following is a 409-amino-acid chain: Protein naked cuticle homolog 2-like (409 aa).

Gly2 carries N-myristoyl glycine lipidation. The EF-hand domain occupies 109–144 (AEDNRQEWVFTLYDFDNSGKVTKEDMSSLMHTIYDV). 5 residues coordinate Ca(2+): Asp122, Asp124, Ser126, Lys128, and Asp133. 4 disordered regions span residues 166-224 (VTPE…YCVD), 243-315 (TSRF…RFPG), 346-367 (NHTHAHTPSGLQHSHSRRIRSR), and 388-409 (RHEHHHHHEHHHHHHYHHYHQT). Basic and acidic residues-rich tracts occupy residues 171-185 (AARRRDATHTERETS) and 193-224 (VRSEEHRSADRRQSTHIRGQTEAHEGNHYCVD). Low complexity predominate over residues 247-268 (DSSSPDADQDPPSRSSHSQSRP). Residues 389-409 (HEHHHHHEHHHHHHYHHYHQT) are compositionally biased toward basic residues.

The protein belongs to the NKD family.

It localises to the cell membrane. The protein resides in the cytoplasm. Functionally, cell autonomous antagonist of both the canonical and non-canonical Wnt signaling pathways. This Danio rerio (Zebrafish) protein is Protein naked cuticle homolog 2-like (nkd2l).